The chain runs to 149 residues: Calmodulin (149 aa).

N-acetylalanine is present on alanine 2. 4 EF-hand domains span residues glutamate 8–asparagine 43, proline 44–aspartate 79, aspartate 81–lysine 116, and leucine 117–lysine 149. Residues aspartate 21, aspartate 23, aspartate 25, threonine 27, glutamate 32, aspartate 57, aspartate 59, asparagine 61, threonine 63, glutamate 68, aspartate 94, aspartate 96, asparagine 98, glutamate 105, aspartate 130, aspartate 132, aspartate 134, glutamine 136, and glutamate 141 each contribute to the Ca(2+) site.

Belongs to the calmodulin family.

In terms of biological role, calmodulin mediates the control of a large number of enzymes, ion channels and other proteins by Ca(2+). Among the enzymes to be stimulated by the calmodulin-Ca(2+) complex are a number of protein kinases and phosphatases. This Achlya klebsiana protein is Calmodulin (CMD1).